A 63-amino-acid polypeptide reads, in one-letter code: Large ribosomal subunit protein uL29 (63 aa).

It belongs to the universal ribosomal protein uL29 family.

This Bordetella petrii (strain ATCC BAA-461 / DSM 12804 / CCUG 43448) protein is Large ribosomal subunit protein uL29.